We begin with the raw amino-acid sequence, 473 residues long: Serine incorporator 3 (473 aa).

The Extracellular portion of the chain corresponds to 1–96 (MGAVLGVFSL…KDCDVLVGYK (96 aa)). Asn-34 carries N-linked (GlcNAc...) asparagine glycosylation. Residues 97-117 (AVYRISFAMAIFFFVFSLLMF) form a helical membrane-spanning segment. Residues 118–132 (KVKTSKDLRAAVHNG) lie on the Cytoplasmic side of the membrane. Residues 133 to 153 (FWFFKIAALIGIMVGSFYIPG) form a helical membrane-spanning segment. Residues 154–159 (GYFSSV) lie on the Extracellular side of the membrane. The chain crosses the membrane as a helical span at residues 160 to 180 (WFVVGMIGAALFILIQLVLLV). Residues 181–203 (DFAHSWNESWVNRMEEGNPRLWY) lie on the Cytoplasmic side of the membrane. The chain crosses the membrane as a helical span at residues 204–224 (AALLSFTSAFYILSIICVGLL). Over 225 to 239 (YTYYTKPDGCTENKF) the chain is Extracellular. Residues 240-260 (FISINLILCVVASIISIHPKI) traverse the membrane as a helical segment. Residues 261–329 (QEHQPRSGLL…VPTPTPPSKS (69 aa)) are Cytoplasmic-facing. A helical membrane pass occupies residues 330-350 (GSLLDSDNFIGLFVFVLCLLY). Residues 351 to 406 (SSIRTSTNSQVDKLTLSGSDSVILGDTTTSGASDEEDGQPRRAVDNEKEGVQYSYS) are Extracellular-facing. Phosphoserine is present on Ser-371. The helical transmembrane segment at 407–427 (LFHLMLCLASLYIMMTLTSWY) threads the bilayer. The Cytoplasmic portion of the chain corresponds to 428–446 (SPDAKFQSMTSKWPAVWVK). Residues 447-467 (ISSSWVCLLLYVWTLVAPLVL) traverse the membrane as a helical segment. Residues 468–473 (TSRDFS) are Extracellular-facing.

Belongs to the TDE1 family. In terms of processing, N-glycosylated. Ubiquitous. Expression levels were increased fourfold to tenfold in lung tumor tissues compared with normal pulmonary tissues.

The protein resides in the cell membrane. It localises to the golgi apparatus membrane. It is found in the cytoplasm. The protein localises to the perinuclear region. It catalyses the reaction a 1,2-diacyl-sn-glycero-3-phospho-L-serine(in) = a 1,2-diacyl-sn-glycero-3-phospho-L-serine(out). It carries out the reaction a 1,2-diacyl-sn-glycero-3-phosphocholine(in) = a 1,2-diacyl-sn-glycero-3-phosphocholine(out). The enzyme catalyses a 1,2-diacyl-sn-glycero-3-phosphoethanolamine(in) = a 1,2-diacyl-sn-glycero-3-phosphoethanolamine(out). Restriction factor required to restrict infectivity of lentiviruses, such as HIV-1: acts by inhibiting an early step of viral infection. Impairs the penetration of the viral particle into the cytoplasm. Non-ATP-dependent, non-specific lipid transporter for phosphatidylserine, phosphatidylcholine, and phosphatidylethanolamine. Functions as a scramblase that flips lipids in both directions across the membrane. Phospholipid scrambling results in HIV-1 surface exposure of phosphatidylserine and loss of membrane asymmetry, which leads to changes in HIV-1 Env conformation and loss of infectivity. The protein is Serine incorporator 3 of Homo sapiens (Human).